The following is a 140-amino-acid chain: Putative nickel-responsive regulator 2 (140 aa).

Positions 81, 92, 94, and 100 each coordinate Ni(2+).

This sequence belongs to the transcriptional regulatory CopG/NikR family. The cofactor is Ni(2+).

Functionally, transcriptional regulator. In Methanosarcina mazei (strain ATCC BAA-159 / DSM 3647 / Goe1 / Go1 / JCM 11833 / OCM 88) (Methanosarcina frisia), this protein is Putative nickel-responsive regulator 2.